Reading from the N-terminus, the 81-residue chain is Photosystem I iron-sulfur center (81 aa).

4Fe-4S ferredoxin-type domains lie at 2-31 (SHSVKIYDTCIGCTQCVRACPTDVLEMIPW) and 39-68 (IASAPRTEDCVGCKRCESACPTDFLSVRVY). [4Fe-4S] cluster is bound by residues C11, C14, C17, C21, C48, C51, C54, and C58.

The eukaryotic PSI reaction center is composed of at least 11 subunits. The cofactor is [4Fe-4S] cluster.

Its subcellular location is the plastid. It localises to the chloroplast thylakoid membrane. It catalyses the reaction reduced [plastocyanin] + hnu + oxidized [2Fe-2S]-[ferredoxin] = oxidized [plastocyanin] + reduced [2Fe-2S]-[ferredoxin]. Its function is as follows. Apoprotein for the two 4Fe-4S centers FA and FB of photosystem I (PSI); essential for photochemical activity. FB is the terminal electron acceptor of PSI, donating electrons to ferredoxin. The C-terminus interacts with PsaA/B/D and helps assemble the protein into the PSI complex. Required for binding of PsaD and PsaE to PSI. PSI is a plastocyanin-ferredoxin oxidoreductase, converting photonic excitation into a charge separation, which transfers an electron from the donor P700 chlorophyll pair to the spectroscopically characterized acceptors A0, A1, FX, FA and FB in turn. In Arabis hirsuta (Hairy rock-cress), this protein is Photosystem I iron-sulfur center.